Reading from the N-terminus, the 285-residue chain is Golgi phosphoprotein 3-like (285 aa).

Positions 1-39 are disordered; that stretch reads MTTLTHRARRTEVGKNSEKKVESEENVNQDRNQDNEDIG. A compositionally biased stretch (basic and acidic residues) spans 10–23; the sequence is RTEVGKNSEKKVES. 2 residues coordinate a 1,2-diacyl-sn-glycero-3-phospho-(1D-myo-inositol 4-phosphate): Trp67 and Arg76. Residue Ser112 is modified to Phosphoserine. The a 1,2-diacyl-sn-glycero-3-phospho-(1D-myo-inositol 4-phosphate) site is built by Arg157 and Arg160. Residues 176 to 187 are beta-hairpin required for oligomerization; it reads EKQNFLLFDMTT.

It belongs to the GOLPH3/VPS74 family. As to quaternary structure, homooligomer. Does not interact MYO18; differs from GOLPH3 by its inability to interact with MYO18. May interact with ARF1.

The protein localises to the golgi apparatus. Its subcellular location is the golgi stack membrane. It is found in the trans-Golgi network membrane. Its function is as follows. Phosphatidylinositol-4-phosphate-binding protein that may antagonize the action of GOLPH3 which is required for the process of vesicle budding at the Golgi and anterograde transport to the plasma membrane. This is Golgi phosphoprotein 3-like (GOLPH3L) from Bos taurus (Bovine).